The primary structure comprises 270 residues: NAD kinase (270 aa).

D63 functions as the Proton acceptor in the catalytic mechanism. Residues 63–64, R68, 131–132, K142, R159, D161, 172–177, A196, and Q230 contribute to the NAD(+) site; these read DG, NE, and TAYAMS.

It belongs to the NAD kinase family. A divalent metal cation is required as a cofactor.

The protein resides in the cytoplasm. The enzyme catalyses NAD(+) + ATP = ADP + NADP(+) + H(+). In terms of biological role, involved in the regulation of the intracellular balance of NAD and NADP, and is a key enzyme in the biosynthesis of NADP. Catalyzes specifically the phosphorylation on 2'-hydroxyl of the adenosine moiety of NAD to yield NADP. The polypeptide is NAD kinase (Methanoregula boonei (strain DSM 21154 / JCM 14090 / 6A8)).